The following is a 158-amino-acid chain: Disease resistance response protein Pi49 (158 aa).

The protein belongs to the BetVI family.

The protein is Disease resistance response protein Pi49 (DRR49A) of Pisum sativum (Garden pea).